The primary structure comprises 349 residues: Lipoyl synthase (349 aa).

The [4Fe-4S] cluster site is built by Cys-55, Cys-60, Cys-66, Cys-81, Cys-85, Cys-88, and Ser-292. Residues 67 to 281 (WEDREATFLI…SDAAYELGIK (215 aa)) enclose the Radical SAM core domain. The tract at residues 321–349 (LDSTTSQEASTLLERYGASEDTPVTASRR) is disordered.

This sequence belongs to the radical SAM superfamily. Lipoyl synthase family. The cofactor is [4Fe-4S] cluster.

The protein localises to the cytoplasm. The enzyme catalyses [[Fe-S] cluster scaffold protein carrying a second [4Fe-4S](2+) cluster] + N(6)-octanoyl-L-lysyl-[protein] + 2 oxidized [2Fe-2S]-[ferredoxin] + 2 S-adenosyl-L-methionine + 4 H(+) = [[Fe-S] cluster scaffold protein] + N(6)-[(R)-dihydrolipoyl]-L-lysyl-[protein] + 4 Fe(3+) + 2 hydrogen sulfide + 2 5'-deoxyadenosine + 2 L-methionine + 2 reduced [2Fe-2S]-[ferredoxin]. It participates in protein modification; protein lipoylation via endogenous pathway; protein N(6)-(lipoyl)lysine from octanoyl-[acyl-carrier-protein]: step 2/2. In terms of biological role, catalyzes the radical-mediated insertion of two sulfur atoms into the C-6 and C-8 positions of the octanoyl moiety bound to the lipoyl domains of lipoate-dependent enzymes, thereby converting the octanoylated domains into lipoylated derivatives. In Corynebacterium jeikeium (strain K411), this protein is Lipoyl synthase.